An 81-amino-acid chain; its full sequence is Extracellular matrix regulatory protein B (81 aa).

Functionally, regulates the biosynthesis of the extracellular matrix and the biofilm formation. May act as an enhancer of biofilm gene expression. Acts in parallel to the pathway that governs SinR derepression. The polypeptide is Extracellular matrix regulatory protein B (Bacillus subtilis (strain 168)).